A 425-amino-acid chain; its full sequence is Riboflavin biosynthesis protein RibBA (425 aa).

Positions 1–204 are DHBP synthase; it reads MTRLDSVERA…IADLIEWRRK (204 aa). Residues 28–29, aspartate 33, 141–145, and glutamate 165 contribute to the D-ribulose 5-phosphate site; these read RE and RPGHT. Glutamate 29 contacts Mg(2+). Histidine 144 contributes to the Mg(2+) binding site. Residues 205 to 425 form a GTP cyclohydrolase II region; the sequence is HEKHIERIAE…HLPGEFGGAL (221 aa). 259 to 263 contacts GTP; sequence RVHSE. Positions 264, 275, and 277 each coordinate Zn(2+). GTP-binding positions include glutamine 280, 303-305, and threonine 325; that span reads EGR. The Proton acceptor; for GTP cyclohydrolase activity role is filled by aspartate 337. Residue arginine 339 is the Nucleophile; for GTP cyclohydrolase activity of the active site. Residues threonine 360 and lysine 365 each coordinate GTP.

This sequence in the N-terminal section; belongs to the DHBP synthase family. It in the C-terminal section; belongs to the GTP cyclohydrolase II family. It depends on Mg(2+) as a cofactor. The cofactor is Mn(2+). Zn(2+) serves as cofactor.

It carries out the reaction D-ribulose 5-phosphate = (2S)-2-hydroxy-3-oxobutyl phosphate + formate + H(+). It catalyses the reaction GTP + 4 H2O = 2,5-diamino-6-hydroxy-4-(5-phosphoribosylamino)-pyrimidine + formate + 2 phosphate + 3 H(+). Its pathway is cofactor biosynthesis; riboflavin biosynthesis; 2-hydroxy-3-oxobutyl phosphate from D-ribulose 5-phosphate: step 1/1. It functions in the pathway cofactor biosynthesis; riboflavin biosynthesis; 5-amino-6-(D-ribitylamino)uracil from GTP: step 1/4. Catalyzes the conversion of D-ribulose 5-phosphate to formate and 3,4-dihydroxy-2-butanone 4-phosphate. Functionally, catalyzes the conversion of GTP to 2,5-diamino-6-ribosylamino-4(3H)-pyrimidinone 5'-phosphate (DARP), formate and pyrophosphate. The chain is Riboflavin biosynthesis protein RibBA from Mycobacterium avium (strain 104).